We begin with the raw amino-acid sequence, 214 residues long: MKPFTTHTGVIATLNRSNVDTDAIIPKQFLKSIKRTGYGPSAFYDWRYTADGRPDPNFELNHPRFEGRSILVTRNNFGCGSSREHAVWALVQDGYRVIIAPWKEIGEKRLPAFADIFLSNTTKNGMLCIELSETIIDAIFEQTASQPGLQATVDLTVQQLTIHGRIPATYPFQIEEGVREQLINGLDEIALSLKHEADIAAFEARRPTWMDGRD.

This sequence belongs to the LeuD family. LeuD type 1 subfamily. In terms of assembly, heterodimer of LeuC and LeuD.

It catalyses the reaction (2R,3S)-3-isopropylmalate = (2S)-2-isopropylmalate. It functions in the pathway amino-acid biosynthesis; L-leucine biosynthesis; L-leucine from 3-methyl-2-oxobutanoate: step 2/4. In terms of biological role, catalyzes the isomerization between 2-isopropylmalate and 3-isopropylmalate, via the formation of 2-isopropylmaleate. The protein is 3-isopropylmalate dehydratase small subunit of Desulforapulum autotrophicum (strain ATCC 43914 / DSM 3382 / VKM B-1955 / HRM2) (Desulfobacterium autotrophicum).